We begin with the raw amino-acid sequence, 339 residues long: Anthranilate phosphoribosyltransferase (339 aa).

Residues Gly-81, 84–85 (GD), Ser-89, 91–94 (NVSS), 109–117 (KHGNRALSS), and Ala-121 each bind 5-phospho-alpha-D-ribose 1-diphosphate. Gly-81 is an anthranilate binding site. Ser-93 serves as a coordination point for Mg(2+). Asn-112 lines the anthranilate pocket. Arg-167 is an anthranilate binding site. Mg(2+) is bound by residues Asp-225 and Glu-226.

Belongs to the anthranilate phosphoribosyltransferase family. In terms of assembly, homodimer. Mg(2+) serves as cofactor.

The enzyme catalyses N-(5-phospho-beta-D-ribosyl)anthranilate + diphosphate = 5-phospho-alpha-D-ribose 1-diphosphate + anthranilate. Its pathway is amino-acid biosynthesis; L-tryptophan biosynthesis; L-tryptophan from chorismate: step 2/5. Its function is as follows. Catalyzes the transfer of the phosphoribosyl group of 5-phosphorylribose-1-pyrophosphate (PRPP) to anthranilate to yield N-(5'-phosphoribosyl)-anthranilate (PRA). The polypeptide is Anthranilate phosphoribosyltransferase (Brucella abortus (strain S19)).